The primary structure comprises 286 residues: UDP-3-O-acyl-N-acetylglucosamine deacetylase (286 aa).

His81, His240, and Asp244 together coordinate Zn(2+). The active-site Proton donor is His266.

The protein belongs to the LpxC family. Requires Zn(2+) as cofactor.

It catalyses the reaction a UDP-3-O-[(3R)-3-hydroxyacyl]-N-acetyl-alpha-D-glucosamine + H2O = a UDP-3-O-[(3R)-3-hydroxyacyl]-alpha-D-glucosamine + acetate. The protein operates within glycolipid biosynthesis; lipid IV(A) biosynthesis; lipid IV(A) from (3R)-3-hydroxytetradecanoyl-[acyl-carrier-protein] and UDP-N-acetyl-alpha-D-glucosamine: step 2/6. Catalyzes the hydrolysis of UDP-3-O-myristoyl-N-acetylglucosamine to form UDP-3-O-myristoylglucosamine and acetate, the committed step in lipid A biosynthesis. In Francisella tularensis subsp. tularensis (strain FSC 198), this protein is UDP-3-O-acyl-N-acetylglucosamine deacetylase.